The primary structure comprises 858 residues: NEDD4-binding protein 1 (858 aa).

Residues 17-37 are disordered; the sequence is TCTEPPGGRQSPTASRAQPDS. Positions 26-37 are enriched in polar residues; sequence QSPTASRAQPDS. In terms of domain architecture, KH-like spans 96-180; sequence KEDVYKAKEY…VQQFVALFQE (85 aa). 2 disordered regions span residues 262–321 and 388–424; these read EDKT…TWTV and QKTQ…KEKE. Basic and acidic residues predominate over residues 285 to 316; that stretch reads RSSESEQRDTKRQYSLERREEEQCEEREREPT. The segment covering 389–418 has biased composition (polar residues); that stretch reads KTQSTQGAQRTSRTPDPSPCANASSTSTSN. The 153-residue stretch at 598-750 folds into the RNase NYN domain; it reads LRHIIIDGSN…LGKHGPHLDE (153 aa). Polar residues predominate over residues 774 to 784; sequence SVYSQAAQSTA. The disordered stretch occupies residues 774–823; it reads SVYSQAAQSTAHPSSPSHWPHSGPPDWHLPRPSPSPPPQRSPSETTELKR. Residues 785-799 show a composition bias toward low complexity; the sequence is HPSSPSHWPHSGPPD. Pro residues predominate over residues 804–813; the sequence is RPSPSPPPQR. Positions 813-858 are coCUN; that stretch reads RSPSETTELKRKLYDIFPDQKQRIDRILSDNPYMRDLNALSGLLLG.

It belongs to the N4BP1 family.

The protein resides in the nucleus. It is found in the nucleolus. Its subcellular location is the PML body. Potent suppressor of cytokine production that acts as a regulator of innate immune signaling and inflammation. Acts as a key negative regulator of select cytokine and chemokine responses elicited by TRIF-independent Toll-like receptors (TLRs), thereby limiting inflammatory cytokine responses to minor insults. Has ribonuclease activity. The sequence is that of NEDD4-binding protein 1 from Danio rerio (Zebrafish).